A 363-amino-acid polypeptide reads, in one-letter code: Chorismate synthase (363 aa).

The tract at residues 44-63 (DLDRRKPGTSRHTTQRQEPD) is disordered. Arg-48 and Arg-54 together coordinate NADP(+). FMN contacts are provided by residues 125–127 (RSS), 237–238 (NA), Gly-277, 292–296 (KATSS), and Arg-318.

This sequence belongs to the chorismate synthase family. As to quaternary structure, homotetramer. Requires FMNH2 as cofactor.

The catalysed reaction is 5-O-(1-carboxyvinyl)-3-phosphoshikimate = chorismate + phosphate. It functions in the pathway metabolic intermediate biosynthesis; chorismate biosynthesis; chorismate from D-erythrose 4-phosphate and phosphoenolpyruvate: step 7/7. Catalyzes the anti-1,4-elimination of the C-3 phosphate and the C-6 proR hydrogen from 5-enolpyruvylshikimate-3-phosphate (EPSP) to yield chorismate, which is the branch point compound that serves as the starting substrate for the three terminal pathways of aromatic amino acid biosynthesis. This reaction introduces a second double bond into the aromatic ring system. This is Chorismate synthase from Pseudomonas fluorescens (strain SBW25).